Consider the following 399-residue polypeptide: Bombesin receptor subtype-3 (399 aa).

Residues 1–41 (MSQRQSQSPNQTLISITNDTETSSSVVSNDTTHKGWTGDNS) are Extracellular-facing. Asn10, Asn18, and Asn29 each carry an N-linked (GlcNAc...) asparagine glycan. A helical transmembrane segment spans residues 42-63 (PGIEALCAIYITYAGIISVGIL). Over 64–82 (GNAILIKVFFKTKSMQTVP) the chain is Cytoplasmic. The helical transmembrane segment at 83–103 (NIFITSLAFGDLLLLLTCVPV) threads the bilayer. Residues 104-121 (DATHYLAEGWLFGKVGCK) are Extracellular-facing. Cys120 and Cys203 are oxidised to a cystine. The helical transmembrane segment at 122 to 143 (VLSFIRLTSVGVSVFTLTILSA) threads the bilayer. Residues 144-163 (DRYKAVVKPLERQPPNAILK) lie on the Cytoplasmic side of the membrane. The helical transmembrane segment at 164 to 184 (TCAKAGGIWIVSMIFALPEAI) threads the bilayer. Topologically, residues 185–220 (FSNVYTFQDPNRNVTFESCNSYPISERLLQEIHSLL) are extracellular. Residues 221 to 241 (CFLVFYIIPLSIISVYYSLIA) form a helical membrane-spanning segment. Residues 242 to 272 (RTLYKSTLNIPTEEQSHARKQIESRKRIAKT) lie on the Cytoplasmic side of the membrane. Residues 273–293 (VLVLVALFALCWLPNHLLYLY) traverse the membrane as a helical segment. At 294-313 (HSFTYESYANHSDVPFVIII) the chain is on the extracellular side. Residues 314–333 (FSRVLAFSNSCVNPFALYWL) form a helical membrane-spanning segment. Topologically, residues 334-399 (SKTFQQHFKA…SSAKKGEDKV (66 aa)) are cytoplasmic. The S-palmitoyl cysteine moiety is linked to residue Cys347.

It belongs to the G-protein coupled receptor 1 family. Interacts with C6orf89.

It localises to the cell membrane. Functionally, role in sperm cell division, maturation, or function. This receptor mediates its action by association with G proteins that activate a phosphatidylinositol-calcium second messenger system. The chain is Bombesin receptor subtype-3 (Brs3) from Mus musculus (Mouse).